A 474-amino-acid chain; its full sequence is MSRLVVVSNRIAPPDEHAASAGGLAVGILGALKAAGGLWFGWSGETGNEDQPLKKVKKGNITWASFNLSEQDLDEYYNKFSNAVLWPAFHYRLDLVQFQRPAWDGYLRVNALLADKLLPLLQDDDIIWIHDYHLLPFAHELRKRGVNNRIGFFLHIPFPTPEIFNALPTYDTLLEQLCDYDLLGFQTENDRLAFLDCLSNLTRVTTRSAKSHTACGKAFRTEVYPIGIEPKEIAKQAAGPLPPKLAQLKAELKNVQNIFSVERLDYSKGLPERFLAYEALLEKYPQHHGKIRYTQIAPTSRGDVQAYQDIRHQLENEAGRINGKYGQLGWTPLYYLNQHFDRKLLMKIFRYSDVGLVTPLRDGMNLVAKEYVAAQDPANPGVLVLSQFAGAANELTSALIVNPYDRDEVAAALDRALTMSLAERISRHAEMLDVIVKNDINHWQECFISDLKQIVPRSAESQQRDKVATFPKLA.

R10 contributes to the D-glucose 6-phosphate binding site. 22-23 (GG) lines the UDP-alpha-D-glucose pocket. 2 residues coordinate D-glucose 6-phosphate: Y77 and D131. Positions 263 and 268 each coordinate UDP-alpha-D-glucose. D-glucose 6-phosphate is bound at residue R301. Residues F340 and 366–370 (LVAKE) contribute to the UDP-alpha-D-glucose site.

This sequence belongs to the glycosyltransferase 20 family. Homotetramer.

The enzyme catalyses D-glucose 6-phosphate + UDP-alpha-D-glucose = alpha,alpha-trehalose 6-phosphate + UDP + H(+). Its pathway is glycan biosynthesis; trehalose biosynthesis. Probably involved in the osmoprotection via the biosynthesis of trehalose. Catalyzes the transfer of glucose from UDP-alpha-D-glucose (UDP-Glc) to D-glucose 6-phosphate (Glc-6-P) to form trehalose-6-phosphate. Acts with retention of the anomeric configuration of the UDP-sugar donor. The protein is Trehalose-6-phosphate synthase of Escherichia coli O6:K15:H31 (strain 536 / UPEC).